The following is a 211-amino-acid chain: Histone H1t (211 aa).

Ala1 bears the N-acetylalanine mark. A compositionally biased stretch (low complexity) spans 1–16 (AETAPAAPADSVPASV). A disordered region spans residues 1–42 (AETAPAAPADSVPASVEKPPAKKRGKKPVGLTGTSRKAPSAS). The span at 32 to 42 (TGTSRKAPSAS) shows a compositional bias: polar residues. An H15 domain is found at 39 to 112 (PSASVSKLIT…GASGSFKLSK (74 aa)). Arg57 carries the citrulline modification. The tract at residues 101 to 211 (GTGASGSFKL…TNPRKATNRK (111 aa)) is disordered. Over residues 121 to 135 (GKVKKPAAAKTKKLV) the composition is skewed to basic residues. The residue at position 142 (Ser142) is a Phosphoserine. The span at 147–156 (KANKRAKKSR) shows a compositional bias: basic residues. The residue at position 158 (Thr158) is a Phosphothreonine. Phosphoserine occurs at positions 166 and 181. A compositionally biased stretch (basic residues) spans 176–189 (KQQRKSPAKARAAK).

The protein belongs to the histone H1/H5 family. In terms of processing, phosphorylated in early spermatids. Citrullination at Arg-57 (H1R54ci) by PADI4 takes place within the DNA-binding site of H1 and results in its displacement from chromatin and global chromatin decondensation, thereby promoting pluripotency and stem cell maintenance. Testis-specific.

The protein localises to the nucleus. It localises to the chromosome. In terms of biological role, testis-specific histone H1 that forms less compacted chromatin compared to other H1 histone subtypes. Formation of more relaxed chromatin may be required to promote chromatin architecture required for proper chromosome regulation during meiosis, such as homologous recombination. Histones H1 act as linkers that bind to nucleosomes and compact polynucleosomes into a higher-order chromatin configuration. The chain is Histone H1t from Sus scrofa (Pig).